The chain runs to 427 residues: SAC3 domain-containing protein 1 (427 aa).

Composition is skewed to basic and acidic residues over residues 1-10 and 117-127; these read MGRFKGENRS and ADPKRTVKEYS. Disordered regions lie at residues 1–53 and 101–143; these read MGRF…QDAV and LHRL…LLRP. Residues 134-143 are compositionally biased toward pro residues; sequence PRPPPSLLRP. A PCI domain is found at 229–397; that stretch reads QVQEGFGSLR…EGLPPPGAYH (169 aa). S425 carries the phosphoserine modification.

Belongs to the SAC3 family. As to quaternary structure, may be part of a SEM1-containing complex. As to expression, present in spleen cells (at protein level).

It is found in the cytoplasm. The protein resides in the cytoskeleton. It localises to the microtubule organizing center. The protein localises to the centrosome. Its subcellular location is the spindle. Functionally, involved in centrosome duplication and mitotic progression. The sequence is that of SAC3 domain-containing protein 1 (Sac3d1) from Mus musculus (Mouse).